The sequence spans 1774 residues: Collagen alpha-1(XVIII) chain (1774 aa).

The N-terminal stretch at 1–26 is a signal peptide; the sequence is MAPDPSRRLCLLLLLLLSCRLVPASA. The segment at 27–785 is nonhelical region 1 (NC1); that stretch reads DGNSLSPLNP…QNPGRGLIKG (759 aa). Disordered regions lie at residues 47 to 113 and 218 to 269; these read DSLE…TPAV and LPPF…LEGK. 2 stretches are compositionally biased toward polar residues: residues 55–87 and 244–256; these read KPQN…TPAS and LSSS…SWGN. Asn-354 and Asn-361 each carry an N-linked (GlcNAc...) asparagine glycan. In terms of domain architecture, FZ spans 365 to 482; it reads TSTSRCLPLP…SQEDGYCVFI (118 aa). 5 disulfide bridges follow: Cys-370-Cys-433, Cys-380-Cys-426, Cys-417-Cys-455, Cys-444-Cys-479, and Cys-448-Cys-468. Positions 522 to 704 constitute a Laminin G-like domain; it reads GPDSNSGQVA…EDRASGDFGS (183 aa). A glycan (N-linked (GlcNAc...) asparagine) is linked at Asn-585. Positions 681 to 1458 are disordered; sequence RVSPVHCLDE…PPGPPGAMGA (778 aa). Residues 708-717 are compositionally biased toward basic and acidic residues; the sequence is ESSKSHKEDT. The residue at position 730 (Thr-730) is a Phosphothreonine. The triple-helical region 1 (COL1) stretch occupies residues 786–812; that stretch reads GMKGQKGEPGAQGPPGPAGPQGPAGPV. Residues 809–824 are compositionally biased toward low complexity; it reads AGPVVQSPNSQPVPGA. Residues 813-822 are nonhelical region 2 (NC2); it reads VQSPNSQPVP. Positions 823–878 constitute a Collagen-like 1 domain; that stretch reads GAQGPPGPQGPPGKDGTPGRDGEPGDPGEDGRPGDTGPQGFPGTPGDVGPKGEKGD. The segment at 823 to 896 is triple-helical region 2 (COL2); it reads GAQGPPGPQG…PGPPGPPGPS (74 aa). The span at 839–855 shows a compositional bias: basic and acidic residues; that stretch reads TPGRDGEPGDPGEDGRP. Residues 884 to 895 are compositionally biased toward pro residues; sequence RGPPGPPGPPGP. The tract at residues 897 to 920 is nonhelical region 3 (NC3); sequence FRQDKLTFIDMEGSGFSGDIESLR. The O-linked (Xyl...) (chondroitin sulfate) serine glycan is linked to Ser-910. Residues 921–1042 form a triple-helical region 3 (COL3) region; the sequence is GPRGFPGPPG…PGPPGPPGPG (122 aa). The span at 925–935 shows a compositional bias: pro residues; the sequence is FPGPPGPPGVP. Asn-947 is a glycosylation site (N-linked (GlcNAc...) asparagine). The segment covering 951-963 has biased composition (low complexity); that stretch reads APGPAGLPGVPGK. Collagen-like domains follow at residues 953–1007 and 1008–1041; these read GPAG…GSKG and DLGP…PPGP. Composition is skewed to pro residues over residues 967 to 982 and 1026 to 1041; these read PGFP…PGKE and PVGP…PPGP. Residues 1043–1065 form a nonhelical region 4 (NC4) region; the sequence is FAAGFDDMEGSGIPLWTTARSSD. Collagen-like domains follow at residues 1066-1117, 1118-1147, 1162-1202, and 1216-1264; these read GLQG…GPKG, EKGM…PPGP, PGPE…GEPG, and QKGA…EPGD. Residues 1066-1148 are triple-helical region 4 (COL4); it reads GLQGPPGSPG…PGPPGPPGPV (83 aa). Residues 1138 to 1147 show a composition bias toward pro residues; the sequence is LPGPPGPPGP. Positions 1149-1162 are nonhelical region 5 (NC5); the sequence is IYVSSEDKAIVSTP. The interval 1163–1204 is triple-helical region 5 (COL5); sequence GPEGKPGYAGFPGPAGPKGDLGSKGEQGLPGPKGEKGEPGTI. The interval 1205 to 1217 is nonhelical region 6 (NC6); sequence FSPDGRALGHPQK. The interval 1218-1290 is triple-helical region 6 (COL6); it reads GAKGEPGFRG…PGPPGPPGMP (73 aa). Residues 1275–1289 are compositionally biased toward pro residues; that stretch reads PGPPGPPGPPGPPGM. Positions 1291 to 1300 are nonhelical region 7 (NC7); sequence IYDSNAFVES. Positions 1301–1317 are enriched in low complexity; it reads GRPGLPGQQGVQGPSGP. The triple-helical region 7 (COL7) stretch occupies residues 1301–1333; that stretch reads GRPGLPGQQGVQGPSGPKGDKGEVGPPGPPGQF. The segment at 1334 to 1345 is nonhelical region 8 (NC8); the sequence is PIDLFHLEAEMK. A compositionally biased stretch (basic and acidic residues) spans 1338–1362; the sequence is FHLEAEMKGDKGDRGDAGQKGERGE. The triple-helical region 8 (COL8) stretch occupies residues 1346 to 1369; sequence GDKGDRGDAGQKGERGEPGAPGGG. The short motif at 1351 to 1353 is the Cell attachment site element; that stretch reads RGD. The segment at 1370 to 1376 is nonhelical region 9 (NC9); it reads FFSSSVP. 4 stretches are compositionally biased toward pro residues: residues 1376–1388, 1398–1407, 1418–1431, and 1441–1453; these read PGPP…PGIP, PPGPPGPQGP, PPGP…PSFP, and PGPP…PGPP. Positions 1377–1428 are triple-helical region 9 (COL9); that stretch reads GPPGPPGYPGIPGPKGESIRGPPGPPGPQGPPGIGYEGRQGPPGPPGPPGPP. The nonhelical region 10 (NC10) stretch occupies residues 1429–1441; it reads SFPGPHRQTVSVP. Positions 1442 to 1459 are triple-helical region 10 (COL10); sequence GPPGPPGPPGPPGAMGAS. The nonhelical region 11 (NC11) stretch occupies residues 1460–1774; the sequence is AGQVRIWATY…ENSFMTSFSK (315 aa). A non-collagenous domain 1 association domain region spans residues 1474–1519; it reads DKIREVPEGWLIFVAEREELYVRVRNGFRKVLLEARTALPRGTGNE. The tract at residues 1520 to 1590 is non-collagenous domain 1 hinge region; it reads VAALQPPLVQ…PPARPTLSLA (71 aa). The Zn(2+) site is built by His-1591, His-1593, Asp-1595, His-1601, and Asp-1666. 2 cysteine pairs are disulfide-bonded: Cys-1623–Cys-1763 and Cys-1725–Cys-1755.

The protein belongs to the multiplexin collagen family. As to quaternary structure, forms homotrimers. Recombinant non-collagenous domain 1 has stronger affinity to NID1, HSPG2 and laminin-1:NID1 complex and lower affinity to FBLN1 and FBLN2 than endostatin. In terms of assembly, monomeric. Interacts with KDR/VEGFR2. Interacts with the ITGA5:ITGB1 complex. Interacts with NID1, HSPG2, laminin-1:NID1 complex, FBLN1 and FBLN2. Post-translationally, prolines at the third position of the tripeptide repeating unit (G-X-Y) of the triple-helical regions are hydroxylated. In terms of processing, undergoes proteolytic processing by CTSL/cathepsin-L and elastase-like proteases to generate both non-collagenous domain 1 trimers and endostatin monomers. In tissue extracts (brain, skeletal muscle, heart, kidney, testis and liver) predominantly bands of approximately 38 kDa are detected; recombinant non-collagenous domain 1 shows similar mobility. In vitro, several proteolytic cleavage sites in the non-collagenous domain 1 hinge region generating different endostatin-like peptides are reported. As to expression, expressed in liver, kidney, lung, skeletal muscle and testis.

Its subcellular location is the secreted. It localises to the extracellular space. The protein resides in the extracellular matrix. The protein localises to the basement membrane. Functionally, probably plays a major role in determining the retinal structure as well as in the closure of the neural tube. Its function is as follows. May regulate extracellular matrix-dependent motility and morphogenesis of endothelial and non-endothelial cells; the function requires homotrimerization and implicates MAPK signaling. Potently inhibits endothelial cell proliferation and angiogenesis. May inhibit angiogenesis by binding to the heparan sulfate proteoglycans involved in growth factor signaling. Inhibits VEGFA isoform VEGF165-induced endothelial cell proliferation and migration. Seems to inhibit VEGFA-mediated signaling by blocking the interaction of VEGFA to its receptor KDR/VEGFR2. Modulates endothelial cell migration in an integrin-dependent manner implicating integrin ITGA5:ITGB1 and to a lesser extent ITGAV:ITGB3 and ITGAV:ITGB5. May negatively regulate the activity of homotrimeric non-collagenous domain 1. This Mus musculus (Mouse) protein is Collagen alpha-1(XVIII) chain.